A 378-amino-acid polypeptide reads, in one-letter code: Carbamoyl phosphate synthase small chain (378 aa).

Positions 1 to 189 (MTKPAILALA…DSHPEIAASE (189 aa)) are CPSase. L-glutamine contacts are provided by Ser47, Gly241, and Gly243. The 186-residue stretch at 193 to 378 (HVVAYDYGVK…RFIDAMAKRR (186 aa)) folds into the Glutamine amidotransferase type-1 domain. Residue Cys269 is the Nucleophile of the active site. L-glutamine contacts are provided by Leu270, Gln273, Asn311, Gly313, and Phe314. Catalysis depends on residues His353 and Glu355.

The protein belongs to the CarA family. Composed of two chains; the small (or glutamine) chain promotes the hydrolysis of glutamine to ammonia, which is used by the large (or ammonia) chain to synthesize carbamoyl phosphate. Tetramer of heterodimers (alpha,beta)4.

The enzyme catalyses hydrogencarbonate + L-glutamine + 2 ATP + H2O = carbamoyl phosphate + L-glutamate + 2 ADP + phosphate + 2 H(+). It catalyses the reaction L-glutamine + H2O = L-glutamate + NH4(+). The protein operates within amino-acid biosynthesis; L-arginine biosynthesis; carbamoyl phosphate from bicarbonate: step 1/1. It functions in the pathway pyrimidine metabolism; UMP biosynthesis via de novo pathway; (S)-dihydroorotate from bicarbonate: step 1/3. Small subunit of the glutamine-dependent carbamoyl phosphate synthetase (CPSase). CPSase catalyzes the formation of carbamoyl phosphate from the ammonia moiety of glutamine, carbonate, and phosphate donated by ATP, constituting the first step of 2 biosynthetic pathways, one leading to arginine and/or urea and the other to pyrimidine nucleotides. The small subunit (glutamine amidotransferase) binds and cleaves glutamine to supply the large subunit with the substrate ammonia. The polypeptide is Carbamoyl phosphate synthase small chain (Pseudomonas syringae pv. tomato (strain ATCC BAA-871 / DC3000)).